The following is a 440-amino-acid chain: MKIFGKWLLVTLLICSMPVKAALDIVITEGIDAARPIAVIPFVWQGTGPMPSQISDVVMSDLARSGTFSPADELSLPQRGISTLAQFNASAWMTQPAEAVVMGSIKPYGGDKYLVSFELIDLVKAQLQPDSQSAQDLVIDSRETIITAAQFRQYGHRISDVVYEKLTGIRGAFLTRIAYVVVNHGEKSPYKLMISDYDGYNEQMLLRSPEPLMSPSWSPDGQRLAYVSFENRKAEIYVQNIYTQQRTNVTSFDGINGAPVFSPDGKKLAVTLSKDGQPEVYVVDIATKAIKRVTNHYAIDTEPSWFPDGKSLLITSERGGRPQLYRVFLDSGKISRLTFEGEWNLGGSIAPDGRSIIFVNRTNGKFNIARMDLETRFMQVLTSTRLDESPSVAPNGTMVIYGTTYQGKQVLAAVSMDGRFKARLPVGQGEVKSPSWSPFL.

The signal sequence occupies residues 1–21 (MKIFGKWLLVTLLICSMPVKA).

The protein belongs to the TolB family. As to quaternary structure, the Tol-Pal system is composed of five core proteins: the inner membrane proteins TolA, TolQ and TolR, the periplasmic protein TolB and the outer membrane protein Pal. They form a network linking the inner and outer membranes and the peptidoglycan layer.

Its subcellular location is the periplasm. Functionally, part of the Tol-Pal system, which plays a role in outer membrane invagination during cell division and is important for maintaining outer membrane integrity. The sequence is that of Tol-Pal system protein TolB from Shewanella halifaxensis (strain HAW-EB4).